Consider the following 1274-residue polypeptide: Symplekin (1274 aa).

An interaction with HSF1 region spans residues 1–124; the sequence is MASGSGDSVT…NMLLRDENVN (124 aa). Phosphoserine is present on Ser-13. HEAT repeat units lie at residues 31 to 64, 67 to 101, 104 to 146, 153 to 192, and 227 to 266; these read TTSE…LIIN, PTLL…EACK, IELL…WMVK, LQEA…GLIV, and VLWE…IARQ. Residues 335–392 form a disordered region; it reads IARNMPSSKDTRKRPRDDSDSTLKKMKLEPNLGEDDEDKDLEPGPSGTSKASAQISGQ. The Nuclear localization signal motif lies at 345–360; that stretch reads TRKRPRDDSDSTLKKM. Residues 349–362 are compositionally biased toward basic and acidic residues; that stretch reads PRDDSDSTLKKMKL. Lys-361 is covalently cross-linked (Glycyl lysine isopeptide (Lys-Gly) (interchain with G-Cter in SUMO1); alternate). Lys-361 is covalently cross-linked (Glycyl lysine isopeptide (Lys-Gly) (interchain with G-Cter in SUMO2); alternate). Polar residues predominate over residues 380–392; it reads SGTSKASAQISGQ. Lys-483 is covalently cross-linked (Glycyl lysine isopeptide (Lys-Gly) (interchain with G-Cter in SUMO2)). Ser-494 is modified (phosphoserine). Disordered regions lie at residues 1102–1137 and 1149–1274; these read GKQE…PPQD and LKRQ…KGNS. Positions 1149 to 1159 are enriched in basic and acidic residues; sequence LKRQLEEEQKL. The segment covering 1173-1185 has biased composition (pro residues); the sequence is SPSPSARPGPPPS. A phosphoserine mark is found at Ser-1221 and Ser-1222. Residue Lys-1239 forms a Glycyl lysine isopeptide (Lys-Gly) (interchain with G-Cter in SUMO1) linkage. At Ser-1243 the chain carries Phosphoserine. Position 1257 is a phosphothreonine (Thr-1257). Ser-1259 carries the phosphoserine modification. Positions 1263-1274 are enriched in basic and acidic residues; that stretch reads EDAREPEAKGNS.

The protein belongs to the Symplekin family. As to quaternary structure, found in a heat-sensitive complex at least composed of several cleavage and polyadenylation specific and cleavage stimulation factors. Interacts with CPSF2, CPSF3 and CSTF2. Interacts (via N-terminus) with HSF1; this interaction is direct and occurs upon heat shock. Interacts with SSU72. In terms of tissue distribution, in testis, expressed in polar epithelia and Sertoli cells but not in vascular endothelia. The protein is detected in stomach, duodenum, pancreas, liver, fetal brain, carcinomas, lens-forming cells, fibroblasts, lymphocytes, lymphoma cells, erythroleukemia cells but not in endothelium of vessels, epidermis, intercalated disks, Purkinje fiber cells of the heart and lymph node.

Its subcellular location is the cytoplasm. It is found in the cytoskeleton. The protein resides in the cell junction. The protein localises to the tight junction. It localises to the cell membrane. Its subcellular location is the nucleus. It is found in the nucleoplasm. Functionally, scaffold protein that functions as a component of a multimolecular complex involved in histone mRNA 3'-end processing. Specific component of the tight junction (TJ) plaque, but might not be an exclusively junctional component. May have a house-keeping rule. Is involved in pre-mRNA polyadenylation. Enhances SSU72 phosphatase activity. This chain is Symplekin (SYMPK), found in Homo sapiens (Human).